The chain runs to 248 residues: Adenosylcobinamide-GDP ribazoletransferase (248 aa).

Transmembrane regions (helical) follow at residues Glu24–Trp44, Ile70–Ser90, Val106–Leu126, Ile134–Ala154, Thr157–Val177, Leu188–Tyr210, and Ala228–Ile248.

The protein belongs to the CobS family. It depends on Mg(2+) as a cofactor.

It localises to the cell membrane. It catalyses the reaction alpha-ribazole + adenosylcob(III)inamide-GDP = adenosylcob(III)alamin + GMP + H(+). The catalysed reaction is alpha-ribazole 5'-phosphate + adenosylcob(III)inamide-GDP = adenosylcob(III)alamin 5'-phosphate + GMP + H(+). The protein operates within cofactor biosynthesis; adenosylcobalamin biosynthesis; adenosylcobalamin from cob(II)yrinate a,c-diamide: step 7/7. Its function is as follows. Joins adenosylcobinamide-GDP and alpha-ribazole to generate adenosylcobalamin (Ado-cobalamin). Also synthesizes adenosylcobalamin 5'-phosphate from adenosylcobinamide-GDP and alpha-ribazole 5'-phosphate. The protein is Adenosylcobinamide-GDP ribazoletransferase of Listeria monocytogenes serotype 4b (strain CLIP80459).